Reading from the N-terminus, the 968-residue chain is Ribonuclease E (968 aa).

An S1 motif domain is found at 39–119; that stretch reads SNIYKGKITR…GTKGAALTTF (81 aa). Mg(2+)-binding residues include Asp303 and Asp346. Residues Cys404 and Cys407 each contribute to the Zn(2+) site. The interval 404–407 is required for zinc-mediated homotetramerization and catalytic activity; that stretch reads CPRC. The disordered stretch occupies residues 947–968; it reads IKNSAGAHSATNFSTSPVKKSE. The segment covering 955-968 has biased composition (polar residues); sequence SATNFSTSPVKKSE.

Belongs to the RNase E/G family. RNase E subfamily. Component of the RNA degradosome, which is a multiprotein complex involved in RNA processing and mRNA degradation. Within the RNA degradosome, RNase E assembles into a homotetramer formed by a dimer of dimers. Zn(2+) is required as a cofactor. Mg(2+) serves as cofactor.

Its subcellular location is the cytoplasm. It localises to the cell inner membrane. It carries out the reaction Endonucleolytic cleavage of single-stranded RNA in A- and U-rich regions.. Endoribonuclease that plays a central role in RNA processing and decay. Required for the maturation of 5S and 16S rRNAs and the majority of tRNAs. Also involved in the degradation of most mRNAs. The sequence is that of Ribonuclease E from Buchnera aphidicola subsp. Schizaphis graminum (strain Sg).